The following is a 125-amino-acid chain: UPF0102 protein PSPA7_4996 (125 aa).

This sequence belongs to the UPF0102 family.

This chain is UPF0102 protein PSPA7_4996, found in Pseudomonas paraeruginosa (strain DSM 24068 / PA7) (Pseudomonas aeruginosa (strain PA7)).